Here is a 377-residue protein sequence, read N- to C-terminus: N5-carboxyaminoimidazole ribonucleotide synthase (377 aa).

Residues R93, K133, 138–144, 175–178, E183, H206, and 257–258 each bind ATP; these read GYDGKGQ, EEFV, and NE. The 191-residue stretch at 97–287 folds into the ATP-grasp domain; that stretch reads KALLDHAGVR…QFENHLRAVC (191 aa).

It belongs to the PurK/PurT family. In terms of assembly, homodimer.

It carries out the reaction 5-amino-1-(5-phospho-beta-D-ribosyl)imidazole + hydrogencarbonate + ATP = 5-carboxyamino-1-(5-phospho-D-ribosyl)imidazole + ADP + phosphate + 2 H(+). The protein operates within purine metabolism; IMP biosynthesis via de novo pathway; 5-amino-1-(5-phospho-D-ribosyl)imidazole-4-carboxylate from 5-amino-1-(5-phospho-D-ribosyl)imidazole (N5-CAIR route): step 1/2. In terms of biological role, catalyzes the ATP-dependent conversion of 5-aminoimidazole ribonucleotide (AIR) and HCO(3)(-) to N5-carboxyaminoimidazole ribonucleotide (N5-CAIR). The protein is N5-carboxyaminoimidazole ribonucleotide synthase of Vibrio vulnificus (strain CMCP6).